Reading from the N-terminus, the 329-residue chain is L-arabinose-binding periplasmic protein (329 aa).

The N-terminal stretch at 1 to 23 (MHKFTKALAAIGLAAVMSQSAMA) is a signal peptide.

The protein belongs to the bacterial solute-binding protein 2 family.

Its subcellular location is the periplasm. Functionally, involved in the high-affinity L-arabinose membrane transport system. Binds with high affinity to arabinose, but can also bind D-galactose (approximately 2-fold reduction) and D-fucose (approximately 40-fold reduction). The polypeptide is L-arabinose-binding periplasmic protein (araF) (Escherichia coli (strain K12)).